The primary structure comprises 123 residues: Ribonuclease P protein component 2 (123 aa).

Belongs to the eukaryotic/archaeal RNase P protein component 2 family. As to quaternary structure, consists of a catalytic RNA component and at least 4-5 protein subunits.

Its subcellular location is the cytoplasm. It carries out the reaction Endonucleolytic cleavage of RNA, removing 5'-extranucleotides from tRNA precursor.. Part of ribonuclease P, a protein complex that generates mature tRNA molecules by cleaving their 5'-ends. This is Ribonuclease P protein component 2 from Sulfurisphaera tokodaii (strain DSM 16993 / JCM 10545 / NBRC 100140 / 7) (Sulfolobus tokodaii).